A 530-amino-acid polypeptide reads, in one-letter code: Autoinducer-2 kinase (530 aa).

This sequence belongs to the FGGY kinase family.

The protein localises to the cytoplasm. The catalysed reaction is (S)-4,5-dihydroxypentane-2,3-dione + ATP = (2S)-2-hydroxy-3,4-dioxopentyl phosphate + ADP + H(+). Catalyzes the phosphorylation of autoinducer-2 (AI-2) to phospho-AI-2, which subsequently inactivates the transcriptional regulator LsrR and leads to the transcription of the lsr operon. Phosphorylates the ring-open form of (S)-4,5-dihydroxypentane-2,3-dione (DPD), which is the precursor to all AI-2 signaling molecules, at the C5 position. This Yersinia pestis bv. Antiqua (strain Antiqua) protein is Autoinducer-2 kinase.